Consider the following 93-residue polypeptide: Integration host factor subunit beta (93 aa).

The protein belongs to the bacterial histone-like protein family. As to quaternary structure, heterodimer of an alpha and a beta chain.

This protein is one of the two subunits of integration host factor, a specific DNA-binding protein that functions in genetic recombination as well as in transcriptional and translational control. The chain is Integration host factor subunit beta from Actinobacillus pleuropneumoniae serotype 7 (strain AP76).